A 325-amino-acid chain; its full sequence is Thioredoxin reductase (325 aa).

FAD is bound by residues 10-13 (SGPS), 39-40 (IA), Gln-44, Asn-53, Val-86, Cys-143, Asp-286, and 293-295 (RQA). Residues Cys-140 and Cys-143 are joined by a disulfide bond.

The protein belongs to the class-II pyridine nucleotide-disulfide oxidoreductase family. Homodimer. It depends on FAD as a cofactor.

The protein localises to the cytoplasm. The enzyme catalyses [thioredoxin]-dithiol + NADP(+) = [thioredoxin]-disulfide + NADPH + H(+). This chain is Thioredoxin reductase (TRR1), found in Pneumocystis carinii.